We begin with the raw amino-acid sequence, 872 residues long: Alanine--tRNA ligase (872 aa).

The Zn(2+) site is built by H567, H571, C669, and H673.

It belongs to the class-II aminoacyl-tRNA synthetase family. The cofactor is Zn(2+).

Its subcellular location is the cytoplasm. It carries out the reaction tRNA(Ala) + L-alanine + ATP = L-alanyl-tRNA(Ala) + AMP + diphosphate. In terms of biological role, catalyzes the attachment of alanine to tRNA(Ala) in a two-step reaction: alanine is first activated by ATP to form Ala-AMP and then transferred to the acceptor end of tRNA(Ala). Also edits incorrectly charged Ser-tRNA(Ala) and Gly-tRNA(Ala) via its editing domain. This chain is Alanine--tRNA ligase, found in Streptococcus pneumoniae (strain CGSP14).